We begin with the raw amino-acid sequence, 540 residues long: Malolactic enzyme (540 aa).

Tyr-90 serves as the catalytic Proton donor. Lys-163 (proton acceptor) is an active-site residue. Position 163 (Lys-163) interacts with substrate. 3 residues coordinate Mn(2+): Glu-234, Asp-235, and Asp-258. NAD(+) contacts are provided by residues Gly-291–Ala-294, Asn-403, and Asn-448. A substrate-binding site is contributed by Asn-448.

It belongs to the malic enzymes family. Homodimer. Mn(2+) is required as a cofactor. The cofactor is NAD(+).

It carries out the reaction (S)-malate + H(+) = (S)-lactate + CO2. In terms of biological role, involved in the malolactic fermentation (MLF) of wine, which results in a natural decrease in acidity and favorable changes in wine flavors. Catalyzes the decarboxylation of L-malate to L-lactate. The sequence is that of Malolactic enzyme from Lactococcus lactis subsp. lactis (strain IL1403) (Streptococcus lactis).